Consider the following 281-residue polypeptide: Insulin-like growth factor-binding protein 2 (281 aa).

The N-terminal stretch at 1–21 (MVLSEHLLVLLGAVLCAPALS) is a signal peptide. Positions 23–106 (VLFRCPPCSP…VLGLGTCGKR (84 aa)) constitute an IGFBP N-terminal domain. 6 cysteine pairs are disulfide-bonded: C27-C56, C30-C58, C38-C59, C47-C62, C70-C83, and C77-C103. 2 disordered regions span residues 107-127 (RDAE…DQSD) and 139-180 (PAVP…RPAR). Basic and acidic residues predominate over residues 156 to 176 (VNRERANEQHRSKTNKSEDKK). A Thyroglobulin type-1 domain is found at 180 to 262 (RSLCQLQLDQ…SPTVRGDPEC (83 aa)). 3 cysteine pairs are disulfide-bonded: C183/C217, C228/C239, and C241/C262. Positions 257–259 (RGD) match the Cell attachment site motif.

Interacts with igf1 and igf2.

The protein resides in the secreted. In terms of biological role, IGF-binding proteins prolong the half-life of the IGFs and have been shown to either inhibit or stimulate the growth promoting effects of the IGFs on cell culture. They alter the interaction of IGFs with their cell surface receptors. This Xenopus laevis (African clawed frog) protein is Insulin-like growth factor-binding protein 2 (igfbp2).